The following is a 611-amino-acid chain: MEAITKYGSYFNVRFLSRLCWRLNLSSSYHYPLLKSSLSFSRFQSPKKLCLVRATTNPTDDNSTTRSFTPHPPSLWGHHFLSASVNQTEMDDLWRQIEALKPIVNAMLLPCNGADAKKITCFIHTLVSLGVSYHFEEKIVEFLKDAFENIEDMIIDCKEDDLYTVSIIFRVFRLYGHYITPDIFNRFKGDDGNFKKCLNDDVRGMLSFYEASHFGTTTEDILEEAMSFTQKHLELFLVGEKAKHYPHITKLIQAALYIPQNFNLEILVAREYIDFYELETDHNEMLLKLAKLNFRFLQLQYIQDLKTLTTWWKELDLVSKIPVYFRERLAEPYFWATGIYYEPQYSAARIMLAKSIILVDIVDNTFDVYGTIDEVKSLVQAIERWDSDAVDVLPDYLKVVFRTTFDLFKELEEYVSSEARSFTMQYAYEQLRILMKGYLQEAEWSNRGHLPSHEEYIEVGVASTAGEVLLAMTFIPMGDAAGVGVYEWLRSRPKLTHALFVKSRLRDDIATYKEEMKRGDVCNGINCYTKQHKVSEEEACIEFEKKTNHMSKVMNEEFLKAAKFIPLHILRPVLNYGRLADVCYKYGDGYTFAGEKIKDYITSLYVDLITL.

Mg(2+)-binding residues include D363, D367, D507, T511, and E515. The short motif at 363 to 367 is the DDXXD motif; degenerate element; the sequence is DNTFD.

It belongs to the terpene synthase family. Tpsa subfamily. It depends on Mg(2+) as a cofactor. Requires Mn(2+) as cofactor. In terms of tissue distribution, predominantly expressed in flowers but also in stems, siliques, roots and leaves.

The protein localises to the cytoplasm. The enzyme catalyses (2E,6E,10E)-geranylgeranyl diphosphate + H2O = (3E,7E)-dolabella-3,7-dien-18-ol + diphosphate. It functions in the pathway secondary metabolite biosynthesis; terpenoid biosynthesis. Its function is as follows. Involved in terpene biosynthesis in roots. Possesses sesquiterpene (C15) synthase activity and diterpene (C20) synthase activity in vitro. Possesses dolabella-3,7-dien-18-ol synthase activity in vitro. Catalyzes the formation of dolabella-3,7-dien-18-ol from geranylgeranyl diphosphate. This is Dolabella-3,7-dien-18-ol synthase TPS06 from Arabidopsis thaliana (Mouse-ear cress).